The following is a 218-amino-acid chain: Small ribosomal subunit protein uS3 (218 aa).

The KH type-2 domain maps to 40 to 109 (IRKIINTEYS…DVSINIREVK (70 aa)).

Belongs to the universal ribosomal protein uS3 family. In terms of assembly, part of the 30S ribosomal subunit. Forms a tight complex with proteins S10 and S14.

Its function is as follows. Binds the lower part of the 30S subunit head. Binds mRNA in the 70S ribosome, positioning it for translation. The polypeptide is Small ribosomal subunit protein uS3 (Orientia tsutsugamushi (strain Boryong) (Rickettsia tsutsugamushi)).